We begin with the raw amino-acid sequence, 185 residues long: Transcription termination/antitermination protein NusG (185 aa).

Residues 133–161 (PGEEVRVTEGPFADFNGTVEEVDYEKGRL) form the KOW domain.

The protein belongs to the NusG family.

In terms of biological role, participates in transcription elongation, termination and antitermination. The chain is Transcription termination/antitermination protein NusG from Haemophilus influenzae (strain ATCC 51907 / DSM 11121 / KW20 / Rd).